Here is a 169-residue protein sequence, read N- to C-terminus: Phosphopantetheine adenylyltransferase (169 aa).

Substrate is bound at residue serine 10. ATP-binding positions include 10–11 (SF) and histidine 18. Substrate-binding residues include lysine 42, leucine 74, and arginine 88. ATP contacts are provided by residues 89–91 (GLR), glutamate 99, and 124–130 (YAFLSSS).

Belongs to the bacterial CoaD family. As to quaternary structure, homohexamer. Mg(2+) is required as a cofactor.

Its subcellular location is the cytoplasm. It carries out the reaction (R)-4'-phosphopantetheine + ATP + H(+) = 3'-dephospho-CoA + diphosphate. Its pathway is cofactor biosynthesis; coenzyme A biosynthesis; CoA from (R)-pantothenate: step 4/5. Its function is as follows. Reversibly transfers an adenylyl group from ATP to 4'-phosphopantetheine, yielding dephospho-CoA (dPCoA) and pyrophosphate. The polypeptide is Phosphopantetheine adenylyltransferase (Geobacillus sp. (strain WCH70)).